The chain runs to 1416 residues: Phospholipid-transporting ATPase VD (1416 aa).

At 1–97 the chain is on the cytoplasmic side; sequence MTELLQWARH…PRNLFEQFHR (97 aa). Residues 98-118 traverse the membrane as a helical segment; that stretch reads AANLYFLFLVVLNWVPLVEAF. At 119–120 the chain is on the exoplasmic loop side; sequence QK. Residues 121-141 traverse the membrane as a helical segment; it reads EITMLPLVVVLTIIAIKDGLE. The Cytoplasmic segment spans residues 142–321; it reads DYRKYKIDKQ…SKLERRANTD (180 aa). Residues 322–342 traverse the membrane as a helical segment; sequence VLWCVLLLIVMCLTGALGHGI. Residues 343–365 lie on the Exoplasmic loop side of the membrane; it reads WLSRYENMLFFNIPEPDGRVISP. A helical transmembrane segment spans residues 366–386; it reads VLTGFYVFWTMIILLQVLIPI. Topologically, residues 387-1110 are cytoplasmic; sequence SLYVSIEIVK…HWCYTRLSNM (724 aa). Asp-438 serves as the catalytic 4-aspartylphosphate intermediate. The ATP site is built by Asp-438, Lys-439, and Thr-440. Asp-438 is a binding site for Mg(2+). Mg(2+) is bound at residue Thr-440. The tract at residues 498–544 is disordered; that stretch reads AQGCRTVPSGPLGKPSAQLSGSTSAVGNGEGSGEVPHSRQAAFSSPM. Polar residues predominate over residues 514 to 523; sequence AQLSGSTSAV. The ATP site is built by Glu-729, Phe-771, Lys-795, Arg-838, Thr-918, Gly-919, and Asp-920. The segment at 971–990 is disordered; it reads PELASSRKNFPQPSDAQGQG. Positions 976–987 are enriched in polar residues; it reads SRKNFPQPSDAQ. ATP-binding positions include 993–1000, Arg-1027, and Lys-1033; that span reads GLVITGKT. Residue Asp-1053 coordinates Mg(2+). The ATP site is built by Asn-1056 and Asp-1057. Residue Asp-1057 coordinates Mg(2+). A helical membrane pass occupies residues 1111–1131; it reads ILYFFYKNVAYVNLLFWYQFF. At 1132–1142 the chain is on the exoplasmic loop side; the sequence is CGFSGTSMTDY. Residues 1143–1163 traverse the membrane as a helical segment; that stretch reads WVLIFFNLLFTSVPPIIYGVL. The Cytoplasmic segment spans residues 1164 to 1192; the sequence is EKDVSAETLLQLPELYRSGQRSEEYLPLT. A helical membrane pass occupies residues 1193-1213; that stretch reads FWITLLDAFYQSLVCFFVPYF. Over 1214-1221 the chain is Exoplasmic loop; that stretch reads TYQGSDID. Residues 1222-1242 form a helical membrane-spanning segment; the sequence is IFTFGNPLNTAALFIILLHLV. Topologically, residues 1243-1252 are cytoplasmic; sequence IESKSLTWIH. Residues 1253-1273 form a helical membrane-spanning segment; it reads MLVTVGSILSYFFFALAFGAL. Over 1274–1289 the chain is Exoplasmic loop; sequence CVTCNPPSNPYGIMRK. The chain crosses the membrane as a helical span at residues 1290 to 1310; sequence HMLDPVFYLVCVLTTFVALLP. Residues 1311–1416 are Cytoplasmic-facing; sequence RFLYRVLQGS…ASKMTGSSAS (106 aa). The tract at residues 1358–1416 is disordered; it reads SKHASQSAAMSGRPTPGSSAVLAMKSATVSTVEQSTRETALDRGCSEPGASKMTGSSAS. 1361–1368 provides a ligand contact to ATP; sequence ASQSAAMS. Over residues 1392–1402 the composition is skewed to basic and acidic residues; that stretch reads STRETALDRGC.

Belongs to the cation transport ATPase (P-type) (TC 3.A.3) family. Type IV subfamily. In terms of assembly, component of a P4-ATPase flippase complex which consists of a catalytic alpha subunit ATP10A and an accessory beta subunit TMEM30A. The cofactor is Mg(2+). Post-translationally, autophosphorylated at the conserved aspartate of the P-type ATPase signature sequence. As to expression, expressed at low amounts in liver, brain, testes, and kidney (at protein level). Expressed in placenta.

Its subcellular location is the cell membrane. The protein localises to the endoplasmic reticulum membrane. The catalysed reaction is ATP + H2O + phospholipidSide 1 = ADP + phosphate + phospholipidSide 2.. The enzyme catalyses a beta-D-glucosyl-(1&lt;-&gt;1')-N-acylsphing-4-enine(out) + ATP + H2O = a beta-D-glucosyl-(1&lt;-&gt;1')-N-acylsphing-4-enine(in) + ADP + phosphate + H(+). Functionally, catalytic component of a P4-ATPase flippase complex, which catalyzes the hydrolysis of ATP coupled to the transport of glucosylceramide (GlcCer) from the outer to the inner leaflet of the plasma membrane. The protein is Phospholipid-transporting ATPase VD (Atp10d) of Mus musculus (Mouse).